The primary structure comprises 343 residues: Photosystem II protein D1 (343 aa).

3 helical membrane passes run 28-45 (YIGWFGVLLFPLIAVSTV), 117-132 (HFLAAVLAWLGREYEY), and 141-155 (WIYLAFSAPVVAASA). Residue H117 coordinates chlorophyll a. W125 is a binding site for pheophytin a. D169 and E188 together coordinate [CaMn4O5] cluster. A helical membrane pass occupies residues 196-217 (FHILGVSAVFGGSLFSAMHGSL). Residue H197 participates in chlorophyll a binding. Residues H214 and 263 to 264 (SF) each bind a quinone. Residue H214 coordinates Fe cation. H271 serves as a coordination point for Fe cation. The helical transmembrane segment at 273–287 (FLAAWPVIGIWCTAI) threads the bilayer. The [CaMn4O5] cluster site is built by H331, E332, D341, and A343.

Belongs to the reaction center PufL/M/PsbA/D family. PSII is composed of 1 copy each of membrane proteins PsbA, PsbB, PsbC, PsbD, PsbE, PsbF, PsbH, PsbI, PsbJ, PsbK, PsbL, PsbM, PsbT, PsbX, PsbY, PsbZ, Psb30/Ycf12, at least 3 peripheral proteins of the oxygen-evolving complex and a large number of cofactors. It forms dimeric complexes. The D1/D2 heterodimer binds P680, chlorophylls that are the primary electron donor of PSII, and subsequent electron acceptors. It shares a non-heme iron and each subunit binds pheophytin, quinone, additional chlorophylls, carotenoids and lipids. D1 provides most of the ligands for the Mn4-Ca-O5 cluster of the oxygen-evolving complex (OEC). There is also a Cl(-1) ion associated with D1 and D2, which is required for oxygen evolution. The PSII complex binds additional chlorophylls, carotenoids and specific lipids. serves as cofactor. Tyr-160 forms a radical intermediate that is referred to as redox-active TyrZ, YZ or Y-Z.

It is found in the plastid. The protein localises to the chloroplast thylakoid membrane. It carries out the reaction 2 a plastoquinone + 4 hnu + 2 H2O = 2 a plastoquinol + O2. Functionally, photosystem II (PSII) is a light-driven water:plastoquinone oxidoreductase that uses light energy to abstract electrons from H(2)O, generating O(2) and a proton gradient subsequently used for ATP formation. It consists of a core antenna complex that captures photons, and an electron transfer chain that converts photonic excitation into a charge separation. The D1/D2 (PsbA/PsbD) reaction center heterodimer binds P680, the primary electron donor of PSII as well as several subsequent electron acceptors. The polypeptide is Photosystem II protein D1 (Prorocentrum micans (Red tide dinoflagellate)).